We begin with the raw amino-acid sequence, 770 residues long: Endothelin-converting enzyme 1 (770 aa).

At 1-68 the chain is on the cytoplasmic side; it reads MRGVWPPPVS…WAARTQVEKR (68 aa). Thr-25 carries the post-translational modification Phosphothreonine. Residues 69 to 89 traverse the membrane as a helical; Signal-anchor for type II membrane protein segment; that stretch reads LVVLVVLLAAGLVACLAALGI. Over 90-770 the chain is Extracellular; it reads QYQTRSPSVC…MNPPHKCEVW (681 aa). The region spanning 98–770 is the Peptidase M13 domain; that stretch reads VCLSEACVSV…MNPPHKCEVW (673 aa). 5 cysteine pairs are disulfide-bonded: Cys-99–Cys-104, Cys-122–Cys-755, Cys-130–Cys-715, Cys-185–Cys-435, and Cys-644–Cys-767. 8 N-linked (GlcNAc...) asparagine glycosylation sites follow: Asn-166, Asn-187, Asn-210, Asn-270, Asn-316, Asn-362, Asn-383, and Asn-539. His-607 is a binding site for Zn(2+). Glu-608 is a catalytic residue. His-611 provides a ligand contact to Zn(2+). Residues Asn-632 and Asn-651 are each glycosylated (N-linked (GlcNAc...) asparagine). Position 667 (Glu-667) interacts with Zn(2+). Catalysis depends on Asp-671, which acts as the Proton donor.

Belongs to the peptidase M13 family. Homodimer; disulfide-linked. Interacts with PPP1R16B. Interacts with TSPAN8; this interaction recruits the endothelin converting enzyme ECE1 to tetraspanin-enriched microdomains and positively modulates its enzymatic activity. It depends on Zn(2+) as a cofactor. All isoforms are expressed in umbilical vein endothelial cells, polynuclear neutrophils, fibroblasts, atrium cardiomyocytes and ventricles. Isoforms A, B and C are also expressed in placenta, lung, heart, adrenal gland and phaeochromocytoma; isoforms A and C in liver, testis and small intestine; isoform B, C and D in endothelial cells and umbilical vein smooth muscle cells; isoforms C and D in saphenous vein cells, and isoform C in kidney.

The protein resides in the cell membrane. The enzyme catalyses Hydrolysis of the 21-Trp-|-Val-22 bond in big endothelin to form endothelin 1.. With respect to regulation, inhibited by phosphoramidon. Activated by K49-P1-20, a twenty-residue synthetic peptide shortened from the snake B.asper myotoxin II. In terms of biological role, converts big endothelin-1 to endothelin-1. This chain is Endothelin-converting enzyme 1 (ECE1), found in Homo sapiens (Human).